A 699-amino-acid chain; its full sequence is Bifunctional protein GAL10 (699 aa).

The galactowaldenase stretch occupies residues 1–357 (MTAQLQSEST…TTENPFGYQL (357 aa)). Position 13–44 (13–44 (IVLVTGGAGYIGSHTVVELIENGYDCVVADNL)) interacts with NAD(+). The tract at residues 358-699 (RGVEARFSAE…YGSKIVYRFS (342 aa)) is mutarotase. The For mutarotase activity role is filled by H537. S562 is subject to Phosphoserine.

In the N-terminal section; belongs to the NAD(P)-dependent epimerase/dehydratase family. This sequence in the C-terminal section; belongs to the aldose epimerase family. It depends on NAD(+) as a cofactor.

It carries out the reaction UDP-alpha-D-glucose = UDP-alpha-D-galactose. The enzyme catalyses alpha-D-glucose = beta-D-glucose. It participates in carbohydrate metabolism; galactose metabolism. Its pathway is carbohydrate metabolism; hexose metabolism. In terms of biological role, mutarotase converts alpha-aldose to the beta-anomer. It is active on D-glucose, L-arabinose, D-xylose, D-galactose, maltose and lactose. In Saccharomyces cerevisiae (strain ATCC 204508 / S288c) (Baker's yeast), this protein is Bifunctional protein GAL10 (GAL10).